The primary structure comprises 139 residues: Putative nickel-responsive regulator (139 aa).

Positions 79, 90, 92, and 98 each coordinate Ni(2+).

This sequence belongs to the transcriptional regulatory CopG/NikR family. Ni(2+) serves as cofactor.

Transcriptional regulator. The polypeptide is Putative nickel-responsive regulator (Anaeromyxobacter sp. (strain K)).